Here is a 288-residue protein sequence, read N- to C-terminus: Small ribosomal subunit protein uS2 (288 aa).

Residues 267 to 288 form a disordered region; it reads EEVEEVEEEFIPSEIEDEDEKF.

The protein belongs to the universal ribosomal protein uS2 family.

This chain is Small ribosomal subunit protein uS2, found in Petrotoga mobilis (strain DSM 10674 / SJ95).